A 501-amino-acid polypeptide reads, in one-letter code: Lysine--tRNA ligase (501 aa).

Mg(2+)-binding residues include E402 and E409.

It belongs to the class-II aminoacyl-tRNA synthetase family. In terms of assembly, homodimer. Mg(2+) is required as a cofactor.

It is found in the cytoplasm. The catalysed reaction is tRNA(Lys) + L-lysine + ATP = L-lysyl-tRNA(Lys) + AMP + diphosphate. The chain is Lysine--tRNA ligase from Helicobacter pylori (strain HPAG1).